A 218-amino-acid chain; its full sequence is Ras-related protein RabT2 (218 aa).

32 to 39 is a GTP binding site; it reads GDYKTGKG. The Effector region motif lies at 54 to 61; that stretch reads VSSIGVDF. GTP contacts are provided by residues 80-84 and 140-143; these read DANSC and NKCD. At Cys-215 the chain carries Cysteine methyl ester. The S-geranylgeranyl cysteine moiety is linked to residue Cys-215. The propeptide at 216 to 218 is removed in mature form; that stretch reads NIL.

Belongs to the small GTPase superfamily. Rab family.

It localises to the cell membrane. The chain is Ras-related protein RabT2 (rabT2) from Dictyostelium discoideum (Social amoeba).